The chain runs to 1107 residues: Probable chromatin-remodeling complex ATPase chain (1107 aa).

Disordered regions lie at residues 1-124 (MAKP…KREK) and 177-217 (GNQS…GSGG). Acidic residues-rich tracts occupy residues 8–25 (DEEE…EEQS), 33–43 (GEEEDEEEEEA), 53–65 (GGEE…EEIE), and 89–114 (EGDE…DEAE). Positions 121–147 (KREKARLKEMQKLKKQKIQEILDTQNA) form a coiled coil. Residues 183–193 (KKPRGRGRHAS) are compositionally biased toward basic residues. The segment covering 197–211 (EEEEDEEYLKEEEDA) has biased composition (acidic residues). Residues 243–408 (IRLYENGING…WSLLNFLLPE (166 aa)) enclose the Helicase ATP-binding domain. Residue 256 to 263 (DEMGLGKT) participates in ATP binding. The DEAH box motif lies at 359–362 (DEAH). A Helicase C-terminal domain is found at 536–687 (LLDKLLPKLK…ALVIQQGRLA (152 aa)). SANT domains lie at 877-929 (EGFA…ERYK) and 978-1039 (QNKG…DTLI). Positions 1029-1067 (QELARRCDTLIRLVEKENQEYDEQERQARKDKRMAKNMT) form a coiled coil. The interval 1049–1107 (YDEQERQARKDKRMAKNMTPTKRSALRVSEGETTPSNSFKRRRQSLMDDYVGSGRRKRG) is disordered.

It belongs to the SNF2/RAD54 helicase family. ISWI subfamily.

It is found in the nucleus. In terms of biological role, possesses intrinsic ATP-dependent nucleosome-remodeling activity. Constitutes the catalytic subunit of several complexes capable of forming ordered nucleosome arrays on chromatin in vitro. In Oryza sativa subsp. japonica (Rice), this protein is Probable chromatin-remodeling complex ATPase chain.